The primary structure comprises 280 residues: Pyrethroid hydrolase (280 aa).

Active-site charge relay system residues include Asp202 and His230. A disordered region spans residues 254–280; it reads YRQTATKAGPDRPAGADGGRADRADLP.

It belongs to the AB hydrolase superfamily. In terms of assembly, monomer.

The enzyme catalyses (-)-trans-permethrin + H2O = (3-phenoxyphenyl)methanol + (1S,3R)-3-(2,2-dichlorovinyl)-2,2-dimethylcyclopropanecarboxylate + H(+). Functionally, catalyzes the hydrolysis of pyrethroids pesticides. Catalyzes the hydrolysis of cypermethrin to equimolar amounts of cyano-3-phenoxybenzyl alcohol and 2,2-dimethyl-3-(2,2-dichlorovinyl)-cyclopropanecarboxylic acid. Hydrolyzes cis-permethrin at approximately equal rate to trans-permethrin. The sequence is that of Pyrethroid hydrolase (pytH) from Sphingobium wenxiniae (strain DSM 21828 / CGMCC 1.7748 / JZ-1).